The primary structure comprises 192 residues: MAP6 domain-containing protein 1 (192 aa).

S-palmitoyl cysteine attachment occurs at residues Cys5, Cys10, and Cys11. The segment at 36-106 (LESEEPIPGG…RTKPSATPGR (71 aa)) is disordered. Residue Ser38 is modified to Phosphoserine. A compositionally biased stretch (low complexity) spans 43–58 (PGGVPSRRGPSPAGSR). Mn stretches follow at residues 123–136 (TTSY…WTGV) and 158–170 (DGSP…APEV). Ser160 carries the phosphoserine modification.

Belongs to the STOP family. Interacts with calmodulin. Palmitoylated. Palmitoylation enhances association with microtubules.

Its subcellular location is the golgi apparatus. It is found in the cytoplasm. The protein localises to the cytoskeleton. May have microtubule-stabilizing activity. This chain is MAP6 domain-containing protein 1 (MAP6D1), found in Bos taurus (Bovine).